The chain runs to 502 residues: Dipeptide and tripeptide permease A (502 aa).

Over 1–35 the chain is Cytoplasmic; that stretch reads MSTANNKPTDESVSLNAFKQPKAFYLIFSIELWER. The chain crosses the membrane as a helical span at residues 36–56; that stretch reads FGFYGLQGIMAVYLVKQLGMS. The Periplasmic portion of the chain corresponds to 57 to 60; it reads EADS. Residues 61–81 traverse the membrane as a helical segment; that stretch reads ITLFSSFSALVYGLVAVGGWL. Over 82 to 90 the chain is Cytoplasmic; that stretch reads GDKVLGTKR. The helical transmembrane segment at 91–111 threads the bilayer; that stretch reads VIMLGAVVLAIGYGLVAWSGH. Residue Asp-112 is a topological domain, periplasmic. The chain crosses the membrane as a helical span at residues 113-133; sequence AAVVYMGMATIAVGNGLFKAN. Over 134 to 154 the chain is Cytoplasmic; it reads PSSLLSTCYNKDDPRLDGAFT. The helical transmembrane segment at 155 to 175 threads the bilayer; it reads MYYMSINIGSFFSMLATPWLA. The Periplasmic portion of the chain corresponds to 176 to 179; that stretch reads AKFG. The chain crosses the membrane as a helical span at residues 180–200; sequence WSVAFALSFVGMLITVVNFLF. The Cytoplasmic portion of the chain corresponds to 201–218; that stretch reads CRSWVKNYGSKPDFEPVH. A helical membrane pass occupies residues 219-239; it reads IGKLLATIVGVVILATIATWL. The Periplasmic portion of the chain corresponds to 240–247; it reads LHNQGVAR. Residues 248–268 traverse the membrane as a helical segment; that stretch reads AVLGVVALGIICIFAKEAFAM. At 269-275 the chain is on the cytoplasmic side; it reads QGAARRK. The chain crosses the membrane as a helical span at residues 276-296; that stretch reads MIVAFILMLQAVVFFVLYSQM. At 297–321 the chain is on the periplasmic side; it reads PTSLNFFAIRNVEHSILSIAFEPEQ. Residues 322–342 traverse the membrane as a helical segment; the sequence is FQALNPFWIMIGSPILAAIYN. Residues 343 to 353 lie on the Cytoplasmic side of the membrane; it reads KMGDRLPMPHK. A helical membrane pass occupies residues 354–374; the sequence is FAIGMVLCSGAFLVLPLGTKF. The Periplasmic portion of the chain corresponds to 375–384; sequence ATDAGIVSVN. Residues 385 to 405 form a helical membrane-spanning segment; it reads WLILSYALQSIGELMISGLGL. Residues 406–415 lie on the Cytoplasmic side of the membrane; it reads AMVAQLVPQR. A helical membrane pass occupies residues 416–436; the sequence is LMGFIMGSWFLTTAGAALIAG. Residues 437-460 lie on the Periplasmic side of the membrane; sequence KIANLMAVPENVTDPLVSLEVYGR. Residues 461 to 481 traverse the membrane as a helical segment; that stretch reads VFMQIGIATAVIAVLMLLTAP. The Cytoplasmic segment spans residues 482–502; the sequence is KLNRMTLEDDKAAKATDTATA.

It belongs to the major facilitator superfamily. Proton-dependent oligopeptide transporter (POT/PTR) (TC 2.A.17) family. DtpA subfamily.

It is found in the cell inner membrane. Functionally, proton-dependent permease that transports di- and tripeptides. In Enterobacter sp. (strain 638), this protein is Dipeptide and tripeptide permease A.